The primary structure comprises 51 residues: MAPPQHLCGSHLVDALYLVCGDRGFFYNPKGIVDQCCHRPCDIFDLQNYCN.

3 cysteine pairs are disulfide-bonded: Cys8–Cys37, Cys20–Cys50, and Cys36–Cys41.

Belongs to the insulin family. As to quaternary structure, heterodimer of a B chain and an A chain linked by two disulfide bonds.

It localises to the secreted. Functionally, insulin decreases blood glucose concentration. It increases cell permeability to monosaccharides, amino acids and fatty acids. It accelerates glycolysis, the pentose phosphate cycle, and glycogen synthesis in liver. In Gadus morhua subsp. callarias (Baltic cod), this protein is Insulin (ins).